An 872-amino-acid polypeptide reads, in one-letter code: MSRWKRRFLILGLSIVVLAVFLLIAGFEGIPFLVDLWWFSAQDYGFYFWQRALYQLVVFIQVSIVFFLIFFVNFWVASHYLGSERPADIPPGAPRKKFKNLFFRFQTGSLWIYTPLSLVLSIIIAWPLFQQWESFLLYLVAPDMGIQDPAYGKNISYYLFSFPIYVLILQRLLISFLLLLASLTLFYWIENRLLSQHGKRLPTGAKWHLSILVLMVFFIEIWDFFLQRNGLVYSEAHQPLFSGPGFVEMRVILPFIWLSMFFLLGIAFFLLLFIHKRKGLKTLAVFSLLFILSLGARHFHFLHWATQEYIVKPNELSIQKPFIENSIKATLDAYKLSNVEVRKFERKKALKNIFNAKVQDLLHNVPVWDKELVGQVYRQLQQLRTYYGFPAENVDRYMINGKKQQVFLGARELNYDKLPSGAQKWVNEHLLYTHGYGLAMSSAGQGQGEASMDWFIRGIPPESDEGFNIKQPGIYYGRGSYRYAIAPNENREFDYPKGNANVMTDYQGKGGVSLSSLFEKYIFSVYFQDKDIFFTTQTYDKSKILFRRNIIERIETLTPYLLLDAAPYLVATTEGLYWIQDAYTASTWYPNADVLGLMRFEFPIPPKGSEKINYIRNSVKIVVDAYHGTVNYYIFDSSDPIIQAYSRIYPGLFKPKEQMPEDIRAHIRYPKDLFEIQMGIYAKYHQTDLEIFYQQEDMWTFAQKYNRESETRLRPYYLTLDLIEENRLDFLLFLPMIVKGQDNMRAMLVAGSDDPYYGKLIAYSFPKGELVFGPAQINAVINEDPKVSAQFTLWNQDDSKVVLGDMIIMPVDQVILYIQPVFLTIKDDVRIPKLERIIISDGRSVVMEPTLMEAYAKLKERIETEGAEGESH.

A run of 7 helical transmembrane segments spans residues 8 to 28 (FLIL…AGFE), 56 to 76 (LVVF…NFWV), 109 to 129 (SLWI…WPLF), 159 to 179 (LFSF…FLLL), 207 to 227 (WHLS…FFLQ), 254 to 274 (PFIW…LLFI), and 282 to 302 (TLAV…FHFL).

This sequence belongs to the UPF0182 family.

The protein localises to the cell membrane. This Nitrosococcus oceani (strain ATCC 19707 / BCRC 17464 / JCM 30415 / NCIMB 11848 / C-107) protein is UPF0182 protein Noc_0961.